Consider the following 129-residue polypeptide: Fluoride-specific ion channel FluC (129 aa).

Transmembrane regions (helical) follow at residues 4 to 24 (LFVAAGGALGSTLRYWLSGLI), 32 to 52 (FPWGTLVINISGSIVIGAFAT), 69 to 89 (FFMVGVCGGYTTFSSFSLQTL), and 105 to 125 (VLSVVFCLIGVWLGHVGAVLI). The Na(+) site is built by Gly-76 and Thr-79.

It belongs to the fluoride channel Fluc/FEX (TC 1.A.43) family.

The protein resides in the cell inner membrane. It carries out the reaction fluoride(in) = fluoride(out). With respect to regulation, na(+) is not transported, but it plays an essential structural role and its presence is essential for fluoride channel function. Fluoride-specific ion channel. Important for reducing fluoride concentration in the cell, thus reducing its toxicity. This is Fluoride-specific ion channel FluC from Rhodospirillum rubrum (strain ATCC 11170 / ATH 1.1.1 / DSM 467 / LMG 4362 / NCIMB 8255 / S1).